A 139-amino-acid chain; its full sequence is Early placenta insulin-like peptide (139 aa).

Residues 1–25 (MASLFRSYLPAIWLLLSQLLRESLA) form the signal peptide. Cystine bridges form between cysteine 31/cysteine 125, cysteine 43/cysteine 138, and cysteine 124/cysteine 129. Positions 59–114 (LESGRPKEMVSTSNNKDGQALGTTSEFIPNLSPELKKPLSEGQPSLKKIILSRKKR) are cleaved as a propeptide — c peptide.

It belongs to the insulin family. As to expression, expressed in placenta, uterus and in fetal perichondrium. Expression levels were increased in both early placentas and molar pregnancies and were reduced in choriocarcinoma cells.

It is found in the secreted. May play an important role in trophoblast development and in the regulation of bone formation. In Homo sapiens (Human), this protein is Early placenta insulin-like peptide (INSL4).